Consider the following 95-residue polypeptide: Cell division protein FtsB (95 aa).

Over 1–3 (MRL) the chain is Cytoplasmic. Residues 4–21 (FILILSAILLLFQYDLWF) form a helical membrane-spanning segment. Over 22–95 (GKNGYLDYKE…RIAKENKDNR (74 aa)) the chain is Periplasmic. Residues 28 to 62 (DYKETAEEIAMHKAENTKLSQRNQVVAAEIRDLKD) are a coiled coil.

It belongs to the FtsB family. In terms of assembly, part of a complex composed of FtsB, FtsL and FtsQ.

It localises to the cell inner membrane. Functionally, essential cell division protein. May link together the upstream cell division proteins, which are predominantly cytoplasmic, with the downstream cell division proteins, which are predominantly periplasmic. This chain is Cell division protein FtsB, found in Mannheimia succiniciproducens (strain KCTC 0769BP / MBEL55E).